Here is a 1106-residue protein sequence, read N- to C-terminus: Communication mutant protein F (1106 aa).

A signal peptide spans 1–28 (MKIYKKNHFLKILIIFIYLSCNILKVNA). In terms of domain architecture, G8 spans 254–380 (TIWPNGVVPS…YHNTWSKLAS (127 aa)). Residues Asn267, Asn306, Asn512, Asn536, Asn677, Asn715, and Asn833 are each glycosylated (N-linked (GlcNAc...) asparagine).

Belongs to the comF family.

The protein localises to the secreted. This chain is Communication mutant protein F (comF-1), found in Dictyostelium discoideum (Social amoeba).